The following is a 60-amino-acid chain: Large ribosomal subunit protein bL32 (60 aa).

This sequence belongs to the bacterial ribosomal protein bL32 family.

The sequence is that of Large ribosomal subunit protein bL32 from Pediococcus pentosaceus (strain ATCC 25745 / CCUG 21536 / LMG 10740 / 183-1w).